The chain runs to 507 residues: MQIKAEEISQIIKDQIGDYETSVDLNETGTVISVGDGIARIYGVQNCMAMELLEFPSGIMGLALNLEEDNVGCAVLGSVQGIKEGDIVKRTGKIAEVPVGPAMSGRVVDGLGKPIDGQGPINSDLTSKIEVVAPGVIARKGVHEPCYTGAKAVDAMTPVGRGQRELVIGDRQIGKTALCVDAIIAQKNTDVHCIYVAVGQKKSTVALVVEALRKHGAMEYTTVVAACASDPAPMQYIAPFAGCSMGEYYRDNGQHALIIYDDLSKQAVAYRELSLLLRRPPGREAYPGDIFFNHSRLLERASKVNDELGAGSLTALPIIETQAGDVSAFIPTNVISITDGQVYLEPNLFFSGVRPAVNIGLSVSRVGGSAQCKAMKQVAGTLRLDLAQYRELAAFAAFGSDLDVSTQAKLTRGERLVEILKQPQYQPLPMEKQVTILYAGSTGHLDSLPIGSLAAYEADLYDYLEANEPSVFTDLVAEQAFTDGIKEKLNKALTSFGETFKAIKGLK.

169 to 176 provides a ligand contact to ATP; the sequence is GDRQIGKT.

This sequence belongs to the ATPase alpha/beta chains family. F-type ATPases have 2 components, CF(1) - the catalytic core - and CF(0) - the membrane proton channel. CF(1) has five subunits: alpha(3), beta(3), gamma(1), delta(1), epsilon(1). CF(0) has three main subunits: a(1), b(2) and c(9-12). The alpha and beta chains form an alternating ring which encloses part of the gamma chain. CF(1) is attached to CF(0) by a central stalk formed by the gamma and epsilon chains, while a peripheral stalk is formed by the delta and b chains.

Its subcellular location is the cell inner membrane. The enzyme catalyses ATP + H2O + 4 H(+)(in) = ADP + phosphate + 5 H(+)(out). Functionally, produces ATP from ADP in the presence of a proton gradient across the membrane. The alpha chain is a regulatory subunit. The sequence is that of ATP synthase subunit alpha from Desulfotalea psychrophila (strain LSv54 / DSM 12343).